A 272-amino-acid polypeptide reads, in one-letter code: Putative pyruvate, phosphate dikinase regulatory protein (272 aa).

Position 154–161 (154–161) interacts with ADP; that stretch reads GVSRTSKS.

It belongs to the pyruvate, phosphate/water dikinase regulatory protein family. PDRP subfamily.

It carries out the reaction N(tele)-phospho-L-histidyl/L-threonyl-[pyruvate, phosphate dikinase] + ADP = N(tele)-phospho-L-histidyl/O-phospho-L-threonyl-[pyruvate, phosphate dikinase] + AMP + H(+). It catalyses the reaction N(tele)-phospho-L-histidyl/O-phospho-L-threonyl-[pyruvate, phosphate dikinase] + phosphate + H(+) = N(tele)-phospho-L-histidyl/L-threonyl-[pyruvate, phosphate dikinase] + diphosphate. Its function is as follows. Bifunctional serine/threonine kinase and phosphorylase involved in the regulation of the pyruvate, phosphate dikinase (PPDK) by catalyzing its phosphorylation/dephosphorylation. The protein is Putative pyruvate, phosphate dikinase regulatory protein of Wolbachia sp. subsp. Brugia malayi (strain TRS).